The chain runs to 306 residues: SPbeta prophage-derived uncharacterized protein YonG (306 aa).

The protein is SPbeta prophage-derived uncharacterized protein YonG (yonG) of Bacillus subtilis (strain 168).